Consider the following 328-residue polypeptide: GATA transcription factor 17 (328 aa).

A disordered region spans residues 1 to 68; sequence MSGHHEAKPY…EEYEGGEGVP (68 aa). A compositionally biased stretch (low complexity) spans 14 to 29; it reads RGPAPADEEAAPAAAA. Acidic residues-rich tracts occupy residues 30-39 and 47-63; these read DEAEAEAEVE and EQEYEEGEEGEEEEYEG. The Tify domain maps to 100-135; that stretch reads PHVASNTLTLSFQGEVYVFESVSAERVQAVLLLLGG. In terms of domain architecture, CCT spans 161-203; the sequence is RMASLMRFREKRKERNFDKKIRYTVRKEVALRMQRNRGQFTSS. Residues 198–231 form a disordered region; that stretch reads GQFTSSKSKAEEATSVITSSEGSPNWGAVEGRPP. The GATA-type zinc finger occupies 236 to 263; the sequence is CHHCGISAASTPMMRRGPDGPRTLCNAC.

It belongs to the type IV zinc-finger family. Class C subfamily.

Its subcellular location is the nucleus. Transcriptional activator that specifically binds 5'-GATA-3' or 5'-GAT-3' motifs within gene promoters. The sequence is that of GATA transcription factor 17 from Oryza sativa subsp. japonica (Rice).